Consider the following 426-residue polypeptide: MTKFETVRGMKDYIGIDAEKIRYLESTFRDLAIKYGYSEIITPVVEEFKLFALKGGEELRETMYVFKDKADRELSLRPEITPSVARAYIQNLQSSPKPIRLFYFGTVYRYDEPQYGRYREFRQAGIEMIGDSSILADLEVLDLLYNFYDKLNLSNDITIKINNIGIFRKIMDKYNIEDNLQEHILHLIDKNKINEALDILEKNLKNKDIIDFFNKILTKKDTKLEDIESLAELEEVSRLDIKSEFLYLFRLSRILSDLNIKFKIDLGFVRGLAYYTGLIFEVLHPSVQFSIAGGGRYDKLIELYGGLPSPAIGFAIGVERTLLVIKDLKVEEPVNVIVIGMSEDTIPSMFMVSRILRKEEYKVVINTKDQPLSKLLPYYASQGFKVAIIIGKQELEKNMITVRNLITRKQISVPLENIEDAIKQTL.

Belongs to the class-II aminoacyl-tRNA synthetase family.

It is found in the cytoplasm. It carries out the reaction tRNA(His) + L-histidine + ATP = L-histidyl-tRNA(His) + AMP + diphosphate + H(+). The polypeptide is Histidine--tRNA ligase (Saccharolobus islandicus (strain Y.G.57.14 / Yellowstone #1) (Sulfolobus islandicus)).